We begin with the raw amino-acid sequence, 174 residues long: UPF0113 protein AF_0058 (174 aa).

The 75-residue stretch at 87–161 (RNRVWVNERG…KVFVENLVDR (75 aa)) folds into the PUA domain.

This sequence belongs to the UPF0113 family.

This Archaeoglobus fulgidus (strain ATCC 49558 / DSM 4304 / JCM 9628 / NBRC 100126 / VC-16) protein is UPF0113 protein AF_0058.